The sequence spans 36 residues: MEVNQLGFIATALFVLVPSVFLIILYVQTESQQKSS.

Blocked amino end (Met) is present on Met1. Topologically, residues 1–11 (MEVNQLGFIAT) are lumenal. Residues 12–27 (ALFVLVPSVFLIILYV) form a helical membrane-spanning segment. The Cytoplasmic portion of the chain corresponds to 28 to 36 (QTESQQKSS).

The protein belongs to the PsbM family. PSII is composed of 1 copy each of membrane proteins PsbA, PsbB, PsbC, PsbD, PsbE, PsbF, PsbH, PsbI, PsbJ, PsbK, PsbL, PsbM, PsbT, PsbX, PsbY, PsbZ, Psb30/Ycf12, peripheral proteins PsbO, CyanoQ (PsbQ), PsbU, PsbV, PsbU, PsbV and a large number of cofactors. It forms dimeric complexes. PSII binds multiple chlorophylls, carotenoids and specific lipids. serves as cofactor.

Its subcellular location is the cellular thylakoid membrane. In terms of biological role, one of the components of the core complex of photosystem II (PSII). PSII is a light-driven water:plastoquinone oxidoreductase that uses light energy to abstract electrons from H(2)O, generating O(2) and a proton gradient subsequently used for ATP formation. It consists of a core antenna complex that captures photons, and an electron transfer chain that converts photonic excitation into a charge separation. This subunit is found at the monomer-monomer interface. Probably involved in dimerization of PSII; at the monomer-monomer interface the only protein-protein contacts observed are between the 2 PsbM subunits. Lipids, chlorophylls and carotenoids contribute strongly to PSII dimerization. This is Photosystem II reaction center protein M from Thermostichus vulcanus (Synechococcus vulcanus).